Reading from the N-terminus, the 132-residue chain is Small ribosomal subunit protein uS8 (132 aa).

The protein belongs to the universal ribosomal protein uS8 family. Part of the 30S ribosomal subunit. Contacts proteins S5 and S12.

One of the primary rRNA binding proteins, it binds directly to 16S rRNA central domain where it helps coordinate assembly of the platform of the 30S subunit. This is Small ribosomal subunit protein uS8 from Streptococcus thermophilus (strain CNRZ 1066).